Reading from the N-terminus, the 1072-residue chain is DNA-directed RNA polymerase subunit beta (1072 aa).

It belongs to the RNA polymerase beta chain family. As to quaternary structure, in plastids the minimal PEP RNA polymerase catalytic core is composed of four subunits: alpha, beta, beta', and beta''. When a (nuclear-encoded) sigma factor is associated with the core the holoenzyme is formed, which can initiate transcription.

It localises to the plastid. The protein resides in the chloroplast. It carries out the reaction RNA(n) + a ribonucleoside 5'-triphosphate = RNA(n+1) + diphosphate. Its function is as follows. DNA-dependent RNA polymerase catalyzes the transcription of DNA into RNA using the four ribonucleoside triphosphates as substrates. The polypeptide is DNA-directed RNA polymerase subunit beta (Draba nemorosa (Woodland whitlowgrass)).